The chain runs to 328 residues: MLEHGVMKIPGINNVGKTGQAGGETERIPSTEPLGSSAATSPAGPLGGLPARSSSISNTNRTGENPMITPIISSNLGLKHRVTLRKATLASLMQSLSGESSNRVMWNDRYDTLLIARDPREIKNAIEKSVTDFGGLENYKELTGGADPFALMTPVCGLSANNIFKLMTEKDVPIDPTSIEYLENTSFAEHVNTLDSHKNYVVIVNDGRLGHKFLIDLPALTQGPRTAYIIQSDLGGGALPAVRVEDWISRRGSDPVSLDELNQLLSKDFSKMPDDVQTRLLASILQIDKDPHKVDIKKLHLDGKLRFASHEYDFRQFQRNAQYVAGLG.

Residues 1-68 are disordered; sequence MLEHGVMKIP…TNRTGENPMI (68 aa). Residues 52–63 show a composition bias toward polar residues; sequence RSSSISNTNRTG. Residues cysteine 156, histidine 211, and glutamine 231 contribute to the active site.

The protein belongs to the Cif family.

It is found in the secreted. Its subcellular location is the host nucleus. It carries out the reaction L-glutaminyl-[protein] + H2O = L-glutamyl-[protein] + NH4(+). In terms of biological role, protein-glutamine deamidase effector that inhibits the host cell cycle and other key cellular processes such as the actin network and programmed-cell death. Acts by mediating the side chain deamidation of 'Gln-40' of host NEDD8, converting it to glutamate, thereby abolishing the activity of cullin-RING-based E3 ubiquitin-protein ligase complexes (CRL complexes). Inactivation of CRL complexes prevents ubiquitination and subsequent degradation of the cyclin-dependent kinase inhibitors CDKN1A/p21 and CDKN1B/p27, leading to G1 and G2 cell cycle arrests in host cells. Deamidation of 'Gln-40' of host NEDD8 also triggers macrophage-specific programmed cell death. Also able to catalyze deamidation of 'Gln-40' of host ubiquitin in vitro; however, NEDD8 constitutes the preferred substrate in vivo. Also regulates the host NF-kappa-B signaling via activation of MAPK/ERK cascade: activation of host MAPK/ERK cascade is independent of CRL complexes inhibition, suggesting that Cif has other host protein targets than NEDD8. This chain is Protein-glutamine deamidase Cif, found in Burkholderia pseudomallei (strain K96243).